A 176-amino-acid chain; its full sequence is Shikimate kinase (176 aa).

14 to 19 is a binding site for ATP; that stretch reads GAGKST. Serine 18 is a Mg(2+) binding site. Substrate-binding residues include aspartate 36, arginine 60, and glycine 83. Arginine 121 is an ATP binding site. Arginine 140 contributes to the substrate binding site.

It belongs to the shikimate kinase family. Monomer. Mg(2+) serves as cofactor.

Its subcellular location is the cytoplasm. It catalyses the reaction shikimate + ATP = 3-phosphoshikimate + ADP + H(+). Its pathway is metabolic intermediate biosynthesis; chorismate biosynthesis; chorismate from D-erythrose 4-phosphate and phosphoenolpyruvate: step 5/7. Functionally, catalyzes the specific phosphorylation of the 3-hydroxyl group of shikimic acid using ATP as a cosubstrate. The protein is Shikimate kinase of Francisella philomiragia subsp. philomiragia (strain ATCC 25017 / CCUG 19701 / FSC 153 / O#319-036).